The following is a 201-amino-acid chain: Recombination protein RecR (201 aa).

The C4-type zinc-finger motif lies at 60–75 (CHECGNVDTSDPCTIC). Positions 83–178 (SILVVVEDVS…KVTKLAHGVP (96 aa)) constitute a Toprim domain.

This sequence belongs to the RecR family.

May play a role in DNA repair. It seems to be involved in an RecBC-independent recombinational process of DNA repair. It may act with RecF and RecO. The polypeptide is Recombination protein RecR (Methylobacterium nodulans (strain LMG 21967 / CNCM I-2342 / ORS 2060)).